Reading from the N-terminus, the 207-residue chain is Urease accessory protein UreG (207 aa).

Residue 14-21 participates in GTP binding; that stretch reads GPVGSGKT.

This sequence belongs to the SIMIBI class G3E GTPase family. UreG subfamily. Homodimer. UreD, UreF and UreG form a complex that acts as a GTP-hydrolysis-dependent molecular chaperone, activating the urease apoprotein by helping to assemble the nickel containing metallocenter of UreC. The UreE protein probably delivers the nickel.

Its subcellular location is the cytoplasm. Functionally, facilitates the functional incorporation of the urease nickel metallocenter. This process requires GTP hydrolysis, probably effectuated by UreG. The chain is Urease accessory protein UreG from Pseudomonas putida (strain GB-1).